A 387-amino-acid polypeptide reads, in one-letter code: 3-ketoacyl-CoA thiolase (387 aa).

Residue Cys-91 is the Acyl-thioester intermediate of the active site. Active-site proton acceptor residues include His-343 and Cys-373.

This sequence belongs to the thiolase-like superfamily. Thiolase family. Heterotetramer of two alpha chains (FadB) and two beta chains (FadA).

It is found in the cytoplasm. It catalyses the reaction an acyl-CoA + acetyl-CoA = a 3-oxoacyl-CoA + CoA. It functions in the pathway lipid metabolism; fatty acid beta-oxidation. Functionally, catalyzes the final step of fatty acid oxidation in which acetyl-CoA is released and the CoA ester of a fatty acid two carbons shorter is formed. This Escherichia coli O139:H28 (strain E24377A / ETEC) protein is 3-ketoacyl-CoA thiolase.